The following is a 595-amino-acid chain: Thiol:disulfide interchange protein DsbD (595 aa).

A signal peptide spans 1–24 (MAQRFITLILLLCSVLLAPHSAQS). Cysteine 134 and cysteine 140 form a disulfide bridge. The interval 166–186 (NSSATVNPPATTQPEGDATPV) is disordered. Transmembrane regions (helical) follow at residues 197 to 217 (ALLI…YPLI), 233 to 253 (ILIL…LLGL), 270 to 290 (YVLI…FGLY), 311 to 331 (GGSL…CSPC), 332 to 352 (TTAP…MLAG), 353 to 373 (GGTL…VTLF), 384 to 404 (WMQY…VFLL), 411 to 431 (VWGL…AFVL), and 435 to 455 (AHAG…LIVA). Cysteine 209 and cysteine 331 are joined by a disulfide. The 141-residue stretch at 452 to 592 (LIVARPLQDW…FLQHLQNTPA (141 aa)) folds into the Thioredoxin domain. Cysteine 507 and cysteine 510 are disulfide-bonded.

This sequence belongs to the thioredoxin family. DsbD subfamily.

It is found in the cell inner membrane. It carries out the reaction [protein]-dithiol + NAD(+) = [protein]-disulfide + NADH + H(+). The enzyme catalyses [protein]-dithiol + NADP(+) = [protein]-disulfide + NADPH + H(+). In terms of biological role, required to facilitate the formation of correct disulfide bonds in some periplasmic proteins and for the assembly of the periplasmic c-type cytochromes. Acts by transferring electrons from cytoplasmic thioredoxin to the periplasm. This transfer involves a cascade of disulfide bond formation and reduction steps. In Yersinia pestis bv. Antiqua (strain Nepal516), this protein is Thiol:disulfide interchange protein DsbD.